The sequence spans 158 residues: NAD(P)H-quinone oxidoreductase subunit J, chloroplastic (158 aa).

The protein belongs to the complex I 30 kDa subunit family. In terms of assembly, NDH is composed of at least 16 different subunits, 5 of which are encoded in the nucleus.

The protein localises to the plastid. The protein resides in the chloroplast thylakoid membrane. The enzyme catalyses a plastoquinone + NADH + (n+1) H(+)(in) = a plastoquinol + NAD(+) + n H(+)(out). It catalyses the reaction a plastoquinone + NADPH + (n+1) H(+)(in) = a plastoquinol + NADP(+) + n H(+)(out). NDH shuttles electrons from NAD(P)H:plastoquinone, via FMN and iron-sulfur (Fe-S) centers, to quinones in the photosynthetic chain and possibly in a chloroplast respiratory chain. The immediate electron acceptor for the enzyme in this species is believed to be plastoquinone. Couples the redox reaction to proton translocation, and thus conserves the redox energy in a proton gradient. The protein is NAD(P)H-quinone oxidoreductase subunit J, chloroplastic of Guizotia abyssinica (Niger).